A 200-amino-acid polypeptide reads, in one-letter code: Transcription elongation factor A protein-like 6 (200 aa).

Positions 1–200 (MEKPYNKNEG…QRGLHDIPYL (200 aa)) are disordered. Over residues 20 to 36 (DEVEPDDEGKSDEEEKP) the composition is skewed to acidic residues. S30 is modified (phosphoserine). Composition is skewed to basic and acidic residues over residues 37–52 (DAEG…KAEG), 60–80 (LEDK…KPQG), and 115–154 (DRGT…EELR). S65 is modified (phosphoserine).

This sequence belongs to the TFS-II family. TFA subfamily.

It localises to the nucleus. Its function is as follows. May be involved in transcriptional regulation. This chain is Transcription elongation factor A protein-like 6 (TCEAL6), found in Homo sapiens (Human).